Consider the following 289-residue polypeptide: Glycine--tRNA ligase alpha subunit (289 aa).

It belongs to the class-II aminoacyl-tRNA synthetase family. In terms of assembly, tetramer of two alpha and two beta subunits.

It localises to the cytoplasm. It carries out the reaction tRNA(Gly) + glycine + ATP = glycyl-tRNA(Gly) + AMP + diphosphate. In Prochlorococcus marinus (strain MIT 9515), this protein is Glycine--tRNA ligase alpha subunit.